The following is a 93-amino-acid chain: Large ribosomal subunit protein uL23cz/uL23cy (93 aa).

This sequence belongs to the universal ribosomal protein uL23 family. Part of the 50S ribosomal subunit.

It is found in the plastid. The protein localises to the chloroplast. In terms of biological role, binds to 23S rRNA. In Jasminum nudiflorum (Winter jasmine), this protein is Large ribosomal subunit protein uL23cz/uL23cy (rpl23-A).